The primary structure comprises 227 residues: Claudin-15 (227 aa).

Methionine 1 is a topological domain (cytoplasmic). A helical membrane pass occupies residues 2-24; it reads SVAVETFGFFMSALGLLMLGLTL. The Extracellular portion of the chain corresponds to 25 to 74; the sequence is SNSYWRVSTVHGNVITTNTIFENLWYSCATDSLGVSNCWDFPSMLALSGY. Cysteines 52 and 62 form a disulfide. A helical membrane pass occupies residues 75–99; the sequence is VQGCRALMITAILLGFLGLFLGMVG. The Cytoplasmic portion of the chain corresponds to 100-115; sequence LRCTNVGNMDLSKKAK. At serine 111 the chain carries Phosphoserine. A helical transmembrane segment spans residues 116-140; that stretch reads LLAIAGTLHILAGACGMVAISWYAV. Over 141–159 the chain is Extracellular; that stretch reads NITTDFFNPLYAGTKYELG. Residues 146-147 form an important for the formation of tight-junction strand-like structures region; the sequence is FF. The chain crosses the membrane as a helical span at residues 160-182; sequence PALYLGWSASLLSILGGICVFST. Over 183 to 227 the chain is Cytoplasmic; sequence CCCSSKEEPATRAGLPYKPSTVVIPRATSDESDISFGKYGKNAYV. Residues serine 211, serine 214, and serine 217 each carry the phosphoserine modification.

It belongs to the claudin family. In terms of assembly, can form homo- and heteropolymeric tight junction strands. Post-translationally, palmitoylated when heterogeneously expressed in S.frugiperda cells. Detected in duodenum, jejunum and ileum. Detected on intestinal villi and crypts (at protein level). Ubiquitous. Detected in small and large intestine, colon, jejunum, heart, kidney and lung.

The protein localises to the cell junction. The protein resides in the tight junction. Its subcellular location is the cell membrane. The catalysed reaction is Na(+)(in) = Na(+)(out). It carries out the reaction K(+)(in) = K(+)(out). The enzyme catalyses Cs(+)(in) = Cs(+)(out). It catalyses the reaction Rb(+)(in) = Rb(+)(out). The catalysed reaction is Li(+)(in) = Li(+)(out). It carries out the reaction NH4(+)(in) = NH4(+)(out). The enzyme catalyses methylamine(out) = methylamine(in). It catalyses the reaction H2O(in) = H2O(out). Forms paracellular channels: polymerizes in tight junction strands with cation- and water-selective channels through the strands, conveying epithelial permeability in a process known as paracellular tight junction permeability. In intestinal epithelium, allows for sodium and water fluxes from the peritoneal side to the lumen of the intestine to regulate nutrient absorption and intestinal morphogenesis. The polypeptide is Claudin-15 (Mus musculus (Mouse)).